A 171-amino-acid polypeptide reads, in one-letter code: Sec-independent protein translocase protein TatB (171 aa).

Residues 2 to 22 form a helical membrane-spanning segment; it reads FDGIGFMELLLIGVLGLVVLG. The disordered stretch occupies residues 69-171; it reads SKGLSNLSPE…DTRSNPKANG (103 aa). Polar residues predominate over residues 88–97; it reads QAAQSVNRPY. 2 stretches are compositionally biased toward low complexity: residues 114–130 and 138–158; these read HSPV…HTSP and PTAT…SEPS. Polar residues predominate over residues 160–171; it reads GADTRSNPKANG.

It belongs to the TatB family. The Tat system comprises two distinct complexes: a TatABC complex, containing multiple copies of TatA, TatB and TatC subunits, and a separate TatA complex, containing only TatA subunits. Substrates initially bind to the TatABC complex, which probably triggers association of the separate TatA complex to form the active translocon.

The protein resides in the cell inner membrane. Functionally, part of the twin-arginine translocation (Tat) system that transports large folded proteins containing a characteristic twin-arginine motif in their signal peptide across membranes. Together with TatC, TatB is part of a receptor directly interacting with Tat signal peptides. TatB may form an oligomeric binding site that transiently accommodates folded Tat precursor proteins before their translocation. The sequence is that of Sec-independent protein translocase protein TatB from Shewanella baltica (strain OS185).